The sequence spans 316 residues: Porphobilinogen deaminase (316 aa).

Cysteine 249 is subject to S-(dipyrrolylmethanemethyl)cysteine.

Belongs to the HMBS family. Monomer. It depends on dipyrromethane as a cofactor.

The catalysed reaction is 4 porphobilinogen + H2O = hydroxymethylbilane + 4 NH4(+). It participates in porphyrin-containing compound metabolism; protoporphyrin-IX biosynthesis; coproporphyrinogen-III from 5-aminolevulinate: step 2/4. Its function is as follows. Tetrapolymerization of the monopyrrole PBG into the hydroxymethylbilane pre-uroporphyrinogen in several discrete steps. This Nitrobacter winogradskyi (strain ATCC 25391 / DSM 10237 / CIP 104748 / NCIMB 11846 / Nb-255) protein is Porphobilinogen deaminase.